The chain runs to 233 residues: Ribitol-5-phosphate cytidylyltransferase (233 aa).

CTP-binding positions include 7-10 (LAGG) and 80-86 (GADRNET).

The protein belongs to the IspD/TarI cytidylyltransferase family. TarI subfamily.

It catalyses the reaction D-ribitol 5-phosphate + CTP + H(+) = CDP-L-ribitol + diphosphate. It functions in the pathway cell wall biogenesis; poly(ribitol phosphate) teichoic acid biosynthesis. Catalyzes the transfer of the cytidylyl group of CTP to D-ribitol 5-phosphate. In Lactiplantibacillus plantarum (strain ATCC BAA-793 / NCIMB 8826 / WCFS1) (Lactobacillus plantarum), this protein is Ribitol-5-phosphate cytidylyltransferase.